We begin with the raw amino-acid sequence, 106 residues long: Urease subunit beta (106 aa).

The protein belongs to the urease beta subunit family. Heterotrimer of UreA (gamma), UreB (beta) and UreC (alpha) subunits. Three heterotrimers associate to form the active enzyme.

It localises to the cytoplasm. The enzyme catalyses urea + 2 H2O + H(+) = hydrogencarbonate + 2 NH4(+). Its pathway is nitrogen metabolism; urea degradation; CO(2) and NH(3) from urea (urease route): step 1/1. The polypeptide is Urease subunit beta (Synechococcus sp. (strain CC9311)).